The following is a 297-amino-acid chain: Acetylglutamate kinase (297 aa).

Residues 73–74 (GG), arginine 95, and asparagine 188 each bind substrate.

Belongs to the acetylglutamate kinase family. ArgB subfamily.

The protein resides in the cytoplasm. The enzyme catalyses N-acetyl-L-glutamate + ATP = N-acetyl-L-glutamyl 5-phosphate + ADP. It functions in the pathway amino-acid biosynthesis; L-arginine biosynthesis; N(2)-acetyl-L-ornithine from L-glutamate: step 2/4. Its function is as follows. Catalyzes the ATP-dependent phosphorylation of N-acetyl-L-glutamate. The protein is Acetylglutamate kinase of Nostoc sp. (strain PCC 7120 / SAG 25.82 / UTEX 2576).